Reading from the N-terminus, the 162-residue chain is Corticoliberin-2 (162 aa).

An N-terminal signal peptide occupies residues 1–24 (MRLNFLVTTMALLVAFPPPYECRA). The propeptide occupies 25–119 (IDSSSNQPVT…ALDSEERERR (95 aa)). Residues 57–79 (LGNRNKNSPRSPPDTYPEASQYS) form a disordered region. A Phenylalanine amide modification is found at F160.

The protein belongs to the sauvagine/corticotropin-releasing factor/urotensin I family.

The protein resides in the secreted. This hormone from hypothalamus regulates the release of corticotropin from pituitary gland. The sequence is that of Corticoliberin-2 (crf2) from Catostomus commersonii (White sucker).